We begin with the raw amino-acid sequence, 226 residues long: Large ribosomal subunit protein uL4 (226 aa).

The tract at residues 47-74 is disordered; it reads GTAKAKTRSEVSGGGRKPWPQKHTGRAR.

It belongs to the universal ribosomal protein uL4 family. In terms of assembly, part of the 50S ribosomal subunit.

In terms of biological role, one of the primary rRNA binding proteins, this protein initially binds near the 5'-end of the 23S rRNA. It is important during the early stages of 50S assembly. It makes multiple contacts with different domains of the 23S rRNA in the assembled 50S subunit and ribosome. Functionally, forms part of the polypeptide exit tunnel. This chain is Large ribosomal subunit protein uL4, found in Kosmotoga olearia (strain ATCC BAA-1733 / DSM 21960 / TBF 19.5.1).